We begin with the raw amino-acid sequence, 1253 residues long: Myosin heavy chain 95F (1253 aa).

The Myosin N-terminal SH3-like domain maps to 3-54; sequence EDTQLVWVRDAAEGYIQGRITEIGAKEFEVTPTDRKYPKRTCHFDDIHSSCD. The 710-residue stretch at 57–766 folds into the Myosin motor domain; it reads QDHDDNCELM…KFVEFDRIMR (710 aa). 151-158 contributes to the ATP binding site; sequence GESGAGKT. Residues 647-666 are actin-binding; it reads GELMEKLEQNGTNFIRCIKP. The 30-residue stretch at 808–837 folds into the IQ domain; it reads RNKCVLIAQRIARGFLARKQHRPRYQGIGK. Residues 900–1022 are a coiled coil; sequence ANMNKLTVDL…LRLANESNGQ (123 aa). Residues 1187–1193 form a hydrophobic region region; it reads PILLVAG. The disordered stretch occupies residues 1233-1253; that stretch reads AYKNLGAAKPNGPAAAMQKQQ.

This sequence belongs to the TRAFAC class myosin-kinesin ATPase superfamily. Myosin family. In terms of tissue distribution, isoform B is present at a higher level in the head and gonads than in the thoraxes. Isoform 145 kDa is found only in the head. CLIP-190 and jar are coexpressed at several times in development and in a number of tissues, including embryonic axonal neuron processes and posterior pole.

Its subcellular location is the cytoplasm. The protein localises to the cytoskeleton. Functionally, myosin is a protein that binds to actin and has ATPase activity that is activated by actin. Together CLIP-190 and jar may coordinate the interaction between the actin and microtubule cytoskeleton. May link endocytic vesicles to microtubules and may be involved in transport in the early embryo and in the dynamic process of dorsal closure. It is believed that its function changes during the life cycle. The chain is Myosin heavy chain 95F (jar) from Drosophila melanogaster (Fruit fly).